The chain runs to 407 residues: MDYLNDSMFNNMTYNITSTPLPDAPRFDNVYVSKLCVLGTVFVISFFGNTLVIIQIFRIRGSRSTIQSLILNLAIADLMVSFFNILMDIIWSATVEWLAGNTMCKIMKYLTVFGLHLSTYITVSIALDRCFAILSPMSRSKAPLRVRIMITMAWVLSAIFSIPQAVIFQEQRKMFRQGMFHQCRDSYNALWQKQLYSASSLILLFVIPLIIMVTSYLLILKTIVKTSRQFHDTPISPTSMSCYSVNHGQIRTHLFERARKRSSRMSAVIVAAFILCWTPYYIIFLGFAFFQWDNSRTVIYFFTLGTSNCMLNPLIYGAFTIYKVHRGRSGSANSPSGTRLMIMVNKRGRSTTTTTNRMSGSGRRQLTTGQTITQCASLTNPHQPVRPSPGINSTTSPNGKMPTKPPG.

Over 1 to 36 the chain is Extracellular; it reads MDYLNDSMFNNMTYNITSTPLPDAPRFDNVYVSKLC. N-linked (GlcNAc...) asparagine glycosylation is found at N5, N11, and N15. A helical membrane pass occupies residues 37-57; that stretch reads VLGTVFVISFFGNTLVIIQIF. Over 58–69 the chain is Cytoplasmic; it reads RIRGSRSTIQSL. A helical transmembrane segment spans residues 70-90; the sequence is ILNLAIADLMVSFFNILMDII. At 91-105 the chain is on the extracellular side; sequence WSATVEWLAGNTMCK. C104 and C183 are joined by a disulfide. Residues 106 to 126 form a helical membrane-spanning segment; sequence IMKYLTVFGLHLSTYITVSIA. Over 127-147 the chain is Cytoplasmic; it reads LDRCFAILSPMSRSKAPLRVR. A helical transmembrane segment spans residues 148-168; that stretch reads IMITMAWVLSAIFSIPQAVIF. The Extracellular segment spans residues 169 to 199; that stretch reads QEQRKMFRQGMFHQCRDSYNALWQKQLYSAS. The helical transmembrane segment at 200 to 220 threads the bilayer; it reads SLILLFVIPLIIMVTSYLLIL. Over 221–268 the chain is Cytoplasmic; the sequence is KTIVKTSRQFHDTPISPTSMSCYSVNHGQIRTHLFERARKRSSRMSAV. A helical transmembrane segment spans residues 269–289; the sequence is IVAAFILCWTPYYIIFLGFAF. Residues 290 to 298 are Extracellular-facing; the sequence is FQWDNSRTV. Residues 299–319 form a helical membrane-spanning segment; it reads IYFFTLGTSNCMLNPLIYGAF. At 320–407 the chain is on the cytoplasmic side; the sequence is TIYKVHRGRS…NGKMPTKPPG (88 aa). Positions 377–407 are disordered; it reads SLTNPHQPVRPSPGINSTTSPNGKMPTKPPG.

This sequence belongs to the G-protein coupled receptor 1 family. As to expression, widely expressed in peripheral nervous tissue, gonadal tissue and brain. In the brain, expression is high in the palliovisceral lobe and superior buccal lobe but low in the subvertical lobe, superior and inferior frontal lobe, posterior brachial lobe and pedal lobe. Expressed in stomach, rectum, aorta, heart, salivary gland, branchia, pancreas, radula retractor muscle, branchial vessel but not in white body, esophagus, liver and kidney.

It is found in the cell membrane. Functionally, receptor for gonadotropin releasing hormone (GnRH) that mediates the action of GnRH to stimulate the secretion of the gonadotropic hormones luteinizing hormone (LH) and follicle-stimulating hormone (FSH). This receptor mediates its action by association with G-proteins that activate a phosphatidylinositol-calcium second messenger system. Ligand interaction triggers steroidogenesis in spermatozoa and follicles. Appears to be involved in contraction of the radula retractor muscle. This is Gonadotropin-releasing hormone receptor from Octopus vulgaris (Common octopus).